Consider the following 467-residue polypeptide: ATP-dependent protease ATPase subunit HslU (467 aa).

ATP contacts are provided by residues V22 and 64-69; that span reads GVGKTE. The tract at residues 149-192 is disordered; sequence QTNNPLESLFGGAIPNFGQNNEDEEEPPTEEIKTKRSEIKRQLE. Residues 178-192 are compositionally biased toward basic and acidic residues; the sequence is EEIKTKRSEIKRQLE. ATP contacts are provided by D280, E345, and R417.

It belongs to the ClpX chaperone family. HslU subfamily. A double ring-shaped homohexamer of HslV is capped on each side by a ring-shaped HslU homohexamer. The assembly of the HslU/HslV complex is dependent on binding of ATP.

It localises to the cytoplasm. ATPase subunit of a proteasome-like degradation complex; this subunit has chaperone activity. The binding of ATP and its subsequent hydrolysis by HslU are essential for unfolding of protein substrates subsequently hydrolyzed by HslV. HslU recognizes the N-terminal part of its protein substrates and unfolds these before they are guided to HslV for hydrolysis. The polypeptide is ATP-dependent protease ATPase subunit HslU (Staphylococcus aureus (strain MRSA252)).